Here is a 665-residue protein sequence, read N- to C-terminus: Envelope glycoprotein (665 aa).

Residues 1-31 (MESTTLSKPFKNQVNPWGPLIVLLILGRVNP) form the signal peptide. The interval 32–267 (VALGNSPHQV…KITDSGPRVP (236 aa)) is receptor-binding domain (RBD). The Extracellular portion of the chain corresponds to 32–605 (VALGNSPHQV…FNGSPWFTTL (574 aa)). N-linked (GlcNAc...) asparagine; by host glycosylation occurs at asparagine 43. Cystine bridges form between cysteine 77–cysteine 129, cysteine 103–cysteine 118, cysteine 104–cysteine 114, cysteine 152–cysteine 172, and cysteine 164–cysteine 177. Aspartate 117 provides a ligand contact to Zn(2+). Residues asparagine 199 and asparagine 211 are each glycosylated (N-linked (GlcNAc...) asparagine; by host). Cysteine 209 and cysteine 215 are oxidised to a cystine. A disordered region spans residues 266–307 (VPIGPNPVLSDQRPPSQPRSPPHSNSTPTETPLTLPEPPPAG). A glycan (N-linked (GlcNAc...) asparagine; by host) is linked at asparagine 324. Disulfide bonds link cysteine 334-cysteine 337, cysteine 334-cysteine 558, cysteine 364-cysteine 418, cysteine 383-cysteine 395, cysteine 425-cysteine 438, and cysteine 550-cysteine 557. The short motif at 334 to 337 (CWLC) is the CXXC element. 2 N-linked (GlcNAc...) asparagine; by host glycosylation sites follow: asparagine 356 and asparagine 363. N-linked (GlcNAc...) asparagine; by host glycans are attached at residues asparagine 396, asparagine 400, and asparagine 432. Residues 470–490 (VSLTLALLLGGLTMGGIAAGV) are fusion peptide. The stretch at 505-532 (AAVHDDLKEVEKSITNLEKSLTSLSEVV) forms a coiled coil. Residues 533–549 (LQNRRGLDLLFLKEGGL) form an immunosuppression region. The CX6CC signature appears at 550-558 (CAALKEECC). The chain crosses the membrane as a helical span at residues 606 to 626 (ISTIMGPLIVLLLILLLGPCI). A lipid anchor (S-palmitoyl cysteine; by host) is attached at cysteine 625. Topologically, residues 627–665 (LNRLVQFVKDRISVVQALVLTQQYHQLKSIDPEEMESRE) are cytoplasmic. The YXXL motif; contains endocytosis signal signature appears at 650-653 (YHQL).

In terms of assembly, the mature envelope protein (Env) consists of a trimer of SU-TM heterodimers attached by a labile interchain disulfide bond. In terms of processing, specific enzymatic cleavages in vivo yield mature proteins. Envelope glycoproteins are synthesized as an inactive precursor that is N-glycosylated and processed likely by host cell furin or by a furin-like protease in the Golgi to yield the mature SU and TM proteins. The cleavage site between SU and TM requires the minimal sequence [KR]-X-[KR]-R. The R-peptide is released from the C-terminus of the cytoplasmic tail of the TM protein upon particle formation as a result of proteolytic cleavage by the viral protease. Cleavage of this peptide is required for TM to become fusogenic. Post-translationally, the CXXC motif is highly conserved across a broad range of retroviral envelope proteins. It is thought to participate in the formation of a labile disulfide bond possibly with the CX6CC motif present in the transmembrane protein. Isomerization of the intersubunit disulfide bond to an SU intrachain disulfide bond is thought to occur upon receptor recognition in order to allow membrane fusion. The transmembrane protein is palmitoylated. In terms of processing, the R-peptide is palmitoylated.

The protein localises to the virion membrane. It is found in the host cell membrane. Its function is as follows. The surface protein (SU) attaches the virus to the host cell by binding to its receptor. This interaction triggers the refolding of the transmembrane protein (TM) and is thought to activate its fusogenic potential by unmasking its fusion peptide. Fusion occurs at the host cell plasma membrane. In terms of biological role, the transmembrane protein (TM) acts as a class I viral fusion protein. Under the current model, the protein has at least 3 conformational states: pre-fusion native state, pre-hairpin intermediate state, and post-fusion hairpin state. During viral and target cell membrane fusion, the coiled coil regions (heptad repeats) assume a trimer-of-hairpins structure, positioning the fusion peptide in close proximity to the C-terminal region of the ectodomain. The formation of this structure appears to drive apposition and subsequent fusion of viral and target cell membranes. Membranes fusion leads to delivery of the nucleocapsid into the cytoplasm. This chain is Envelope glycoprotein (env), found in Mus musculus (Mouse).